We begin with the raw amino-acid sequence, 351 residues long: 3-ketosteroid-9-alpha-monooxygenase, ferredoxin reductase component (351 aa).

One can recognise an FAD-binding FR-type domain in the interval 10–116; sequence SRSVILTVSA…LPPAGVFTPK (107 aa). The 2Fe-2S ferredoxin-type domain occupies 264–351; sequence ATVEVELDGE…PVTDHLKIEF (88 aa). 4 residues coordinate [2Fe-2S] cluster: C300, C305, C308, and C338.

In terms of assembly, the two-component system 3-ketosteroid-9-alpha-monooxygenase is composed of an oxygenase component KshA and a reductase component KshB. FAD serves as cofactor. The cofactor is [2Fe-2S] cluster.

The catalysed reaction is androsta-1,4-diene-3,17-dione + 2 reduced [2Fe-2S]-[ferredoxin] + O2 + 2 H(+) = 9alpha-hydroxyandrosta-1,4-diene-3,17-dione + 2 oxidized [2Fe-2S]-[ferredoxin] + H2O. It participates in steroid metabolism; cholesterol degradation. KSH activity is completely inhibited by zinc ions. KshB is specifically inhibited by Cu(2+) ions. In terms of biological role, probably involved in the degradation of cholesterol. In vitro, catalyzes the introduction of a 9alpha-hydroxyl moiety into the ring B of 3-ketosteroid substrates such as 1,4-androstadiene-3,17-dione (ADD), 4-androstene-3,17-dione (AD), 4-androstene-17beta-ol-3-one (testosterone), 4-pregnene-3,20-dione (progesterone), 19-nor-4-androstene-3,17-dione (nordion), 1-(5alpha)-androstene-3,17-dione, 5alpha-androstane-3,17-dione and 5beta-androstane-3,17-dione. KSH has the highest activity with 3-keto-Delta4 steroid substrates. The chain is 3-ketosteroid-9-alpha-monooxygenase, ferredoxin reductase component from Rhodococcus rhodochrous.